The following is a 244-amino-acid chain: ATP synthase subunit a, chloroplastic (244 aa).

5 helical membrane passes run 35–55, 92–112, 131–151, 196–216, and 217–237; these read QVLI…VIAV, VPFI…GALL, INTT…AGLS, LVVV…VMFL, and GLFT…AYIG.

The protein belongs to the ATPase A chain family. As to quaternary structure, F-type ATPases have 2 components, CF(1) - the catalytic core - and CF(0) - the membrane proton channel. CF(1) has five subunits: alpha(3), beta(3), gamma(1), delta(1), epsilon(1). CF(0) has four main subunits: a, b, b' and c.

The protein localises to the plastid. It is found in the chloroplast thylakoid membrane. In terms of biological role, key component of the proton channel; it plays a direct role in the translocation of protons across the membrane. The sequence is that of ATP synthase subunit a, chloroplastic from Gossypium hirsutum (Upland cotton).